Reading from the N-terminus, the 279-residue chain is Tryptophan 2,3-dioxygenase (279 aa).

Residues 48–52, Tyr110, and Arg114 each bind substrate; that span reads FIVIH. His237 contributes to the heme binding site. Thr251 lines the substrate pocket.

Belongs to the tryptophan 2,3-dioxygenase family. As to quaternary structure, homotetramer. Heme serves as cofactor.

It carries out the reaction L-tryptophan + O2 = N-formyl-L-kynurenine. The protein operates within amino-acid degradation; L-tryptophan degradation via kynurenine pathway; L-kynurenine from L-tryptophan: step 1/2. Functionally, heme-dependent dioxygenase that catalyzes the oxidative cleavage of the L-tryptophan (L-Trp) pyrrole ring and converts L-tryptophan to N-formyl-L-kynurenine. Catalyzes the oxidative cleavage of the indole moiety. The protein is Tryptophan 2,3-dioxygenase of Bacillus thuringiensis (strain Al Hakam).